Consider the following 210-residue polypeptide: Ion-translocating oxidoreductase complex subunit G (210 aa).

A helical membrane pass occupies residues 9–29 (SLVLALFAIAATALVTITYAL). Thr-176 carries the FMN phosphoryl threonine modification.

Belongs to the RnfG family. As to quaternary structure, the complex is composed of six subunits: RnfA, RnfB, RnfC, RnfD, RnfE and RnfG. Requires FMN as cofactor.

The protein resides in the cell inner membrane. In terms of biological role, part of a membrane-bound complex that couples electron transfer with translocation of ions across the membrane. The polypeptide is Ion-translocating oxidoreductase complex subunit G (Aliivibrio fischeri (strain ATCC 700601 / ES114) (Vibrio fischeri)).